The sequence spans 467 residues: Cell division protein FtsP (467 aa).

Positions 1–28 (MRSLTRRDFLKSGILASSLSCIPQSVMA) form a signal peptide, tat-type signal.

The protein belongs to the FtsP family. In terms of processing, predicted to be exported by the Tat system. The position of the signal peptide cleavage has not been experimentally proven.

The protein localises to the periplasm. In terms of biological role, cell division protein that is required for growth during stress conditions. May be involved in protecting or stabilizing the divisomal assembly under conditions of stress. The polypeptide is Cell division protein FtsP (Histophilus somni (strain 2336) (Haemophilus somnus)).